Reading from the N-terminus, the 206-residue chain is MARYIGPVGKISRRLGIGITEKGQRILAKRPFPPGQHGPSARRRQVSDYGLQLLEKQKARYIYGVLERQFRRIFEKAQRFPGETGAYLLILLERRLDNVVYRLGFATTRAQARQLVTHGHITVNGRKTNIPSYTVRVGETIAVRPESRRRMYFKNLVESGALAKHKAPDWLRLNPADLSGEVVAMPRREDAEPGINEQLIVEFYSR.

One can recognise an S4 RNA-binding domain in the interval 94–156; that stretch reads RRLDNVVYRL…SRRRMYFKNL (63 aa).

This sequence belongs to the universal ribosomal protein uS4 family. As to quaternary structure, part of the 30S ribosomal subunit. Contacts protein S5. The interaction surface between S4 and S5 is involved in control of translational fidelity.

One of the primary rRNA binding proteins, it binds directly to 16S rRNA where it nucleates assembly of the body of the 30S subunit. In terms of biological role, with S5 and S12 plays an important role in translational accuracy. The sequence is that of Small ribosomal subunit protein uS4 from Roseiflexus castenholzii (strain DSM 13941 / HLO8).